The primary structure comprises 87 residues: MYVIMVYDVNQRRINKVLNTARKYLEWIQNSVLEGEITEAKFEMLKREIEIIINEEEDSVIFYIMRTTKYSERQILGIEKNKREQIL.

Asp8 provides a ligand contact to Mg(2+).

It belongs to the CRISPR-associated endoribonuclease Cas2 protein family. Homodimer, forms a heterotetramer with a Cas1 homodimer. Requires Mg(2+) as cofactor.

In terms of biological role, CRISPR (clustered regularly interspaced short palindromic repeat), is an adaptive immune system that provides protection against mobile genetic elements (viruses, transposable elements and conjugative plasmids). CRISPR clusters contain sequences complementary to antecedent mobile elements and target invading nucleic acids. CRISPR clusters are transcribed and processed into CRISPR RNA (crRNA). Functions as a ssRNA-specific endoribonuclease. Involved in the integration of spacer DNA into the CRISPR cassette. This chain is CRISPR-associated endoribonuclease Cas2, found in Dictyoglomus turgidum (strain DSM 6724 / Z-1310).